A 276-amino-acid polypeptide reads, in one-letter code: Flagellin FljJ (276 aa).

The tract at residues 51-80 (RPGAGDMSGLAREDEPGSGDIDRGRGPRAG) is disordered. Residues 61–75 (AREDEPGSGDIDRGR) show a composition bias toward basic and acidic residues.

It belongs to the bacterial flagellin family. In terms of assembly, in C.crescentus, the flagellar filament is composed of multiple flagellins of 29 kDa; 27 kDa and 25 kDa.

It is found in the secreted. The protein resides in the bacterial flagellum. Flagellin is the subunit protein which polymerizes to form the filaments of bacterial flagella. This is Flagellin FljJ (fljJ) from Caulobacter vibrioides (strain ATCC 19089 / CIP 103742 / CB 15) (Caulobacter crescentus).